Here is a 102-residue protein sequence, read N- to C-terminus: MADFLKGLPVYNKSNFSRFHADSVCKASNRRPSVYLPTREYPSEQIIVTEKTNILLRYLHQQWDKKNAAKKRDQEQVEAEGESSAPPRKVARTDSPDMPEDT.

An N-acetylalanine modification is found at Ala-2. Phosphoserine occurs at positions 33 and 95. The tract at residues 67–102 (NAAKKRDQEQVEAEGESSAPPRKVARTDSPDMPEDT) is disordered.

It belongs to the DDA1 family. In terms of assembly, component of numerous DCX (DDB1-CUL4-X-box) E3 ubiquitin-protein ligase complexes which consist of a core of DDB1, cullin-4 (CUL4A or CUL4B), DDA1 and RBX1. Component of the DCX(DCAF15) complex, also named CLR4(DCAF15) complex, composed of DCAF15, DDB1, cullin-4 (CUL4A or CUL4B), DDA1 and RBX1. Part of the DDD core complex containing DET1, DDA1 and DDB1; the DDD core complex recruits a specific UBE2E enzyme, such as UBE2E1, UBE2E2 UBE2E3, to form specific DDD-E2 complexes.

The protein operates within protein modification; protein ubiquitination. Its function is as follows. Functions as a component of numerous distinct DCX (DDB1-CUL4-X-box) E3 ubiquitin-protein ligase complexes which mediate the ubiquitination and subsequent proteasomal degradation of target proteins. In the DCX complexes, acts as a scaffolding subunit required to stabilize the complex. The protein is DET1- and DDB1-associated protein 1 of Mus musculus (Mouse).